Here is a 249-residue protein sequence, read N- to C-terminus: Acidic leucine-rich nuclear phosphoprotein 32 family member A (249 aa).

Phosphothreonine is present on Thr15. Ser17 carries the phosphoserine modification. 4 LRR repeats span residues 18–38, 43–64, 65–87, and 89–110; these read DVKE…EGLT, ELEF…PKLN, KLKK…AEKC, and NLTH…EPLK. An LRRCT domain is found at 123–161; it reads CEVTNLNDYRENVFKLLPQLTYLDGYDRDDKEAPDSDAE. The segment covering 147–156 has biased composition (basic and acidic residues); it reads GYDRDDKEAP. The disordered stretch occupies residues 147 to 249; the sequence is GYDRDDKEAP…EPEDEGEDDD (103 aa). A necessary for tumor-suppressive function region spans residues 150–174; the sequence is RDDKEAPDSDAEGYVEGLDDEEEDE. The segment covering 157-230 has biased composition (acidic residues); it reads DSDAEGYVEG…DEEDEEELGE (74 aa). 2 positions are modified to phosphoserine; by CK2: Ser158 and Ser204. An interaction with E4F1 region spans residues 165–249; it reads EGLDDEEEDE…EPEDEGEDDD (85 aa).

It belongs to the ANP32 family. As to quaternary structure, component of the SET complex, composed of at least ANP32A, APEX1, HMGB2, NME1, SET and TREX1. Directly interacts with SET. Interacts with ATXN1/SCA1. Interacts with MAP1B. Interacts with ELAVL1. Part of the INHAT (inhibitor of histone acetyltransferases) complex. Interacts with E4F1. In terms of assembly, (Microbial infection) Interacts (via C-terminus) with influenza virus A protein PB2; this interaction promotes viral replication. (Microbial infection) Interacts (via C-terminus) with influenza virus B protein PB2; this interaction promotes viral replication. As to quaternary structure, (Microbial infection) Interacts (via C-terminus) with influenza virus C protein PB2; this interaction promotes viral replication by bridging viral replicase dimers together. Phosphorylated on serine residues, at least in part by casein kinase 2/CK2. In terms of processing, the N-terminus is blocked. Post-translationally, some glutamate residues are glycylated by TTLL8. This modification occurs exclusively on glutamate residues and results in a glycine chain on the gamma-carboxyl group. As to expression, expressed in all tissues tested. Highly expressed in kidney and skeletal muscle, moderate levels of expression in brain, placenta and pancreas, and weakly expressed in lung. Found in all regions of the brain examined (amygdala, caudate nucleus, corpus callosum, hippocampus and thalamus), with highest levels in amygdala.

Its subcellular location is the nucleus. It is found in the cytoplasm. The protein resides in the endoplasmic reticulum. In terms of biological role, multifunctional protein that is involved in the regulation of many processes including tumor suppression, apoptosis, cell cycle progression or transcription. Promotes apoptosis by favouring the activation of caspase-9/CASP9 and allowing apoptosome formation. In addition, plays a role in the modulation of histone acetylation and transcription as part of the INHAT (inhibitor of histone acetyltransferases) complex. Inhibits the histone-acetyltranferase activity of EP300/CREBBP (CREB-binding protein) and EP300/CREBBP-associated factor by histone masking. Preferentially binds to unmodified histone H3 and sterically inhibiting its acetylation and phosphorylation leading to cell growth inhibition. Participates in other biochemical processes such as regulation of mRNA nuclear-to-cytoplasmic translocation and stability by its association with ELAVL1 (Hu-antigen R). Plays a role in E4F1-mediated transcriptional repression as well as inhibition of protein phosphatase 2A. Functionally, (Microbial infection) Plays an essential role in influenza A, B and C viral genome replication. Mechanistically, mediates the assembly of the viral replicase asymmetric dimers composed of PB1, PB2 and PA via its N-terminal region. Also plays an essential role in foamy virus mRNA export from the nucleus. The polypeptide is Acidic leucine-rich nuclear phosphoprotein 32 family member A (ANP32A) (Homo sapiens (Human)).